Reading from the N-terminus, the 303-residue chain is MKFQGLVLIDNCKNQWVVGPLIGKGGFGSIYTTNDNNYVVKIEPKANGSLFTEQAFYTRVLKPSVIEEWKKSHNIKHVGLITCKAFGLYKSINVEYRFLVINRLGADLDAVIRANNNRLPERSVMLIGIEILNTIQFMHEQGYSHGDIKASNIVLDQIDKNKLYLVDYGLVSKFMSNGEHVPFIRNPNKMDNGTLEFTPIDSHKGYVVSRRGDLETLGYCMIRWLGGILPWTKISETKNSALVSAAKQKYVNNTATLLMTSLQYAPRELLQYITMVNSLTYFEEPNYDEFRRVLMNGVMKNFC.

This sequence belongs to the protein kinase superfamily. Ser/Thr protein kinase family. Poxviruses subfamily. Interacts with host JIP1; this interaction increases the amount of MAPK bound to JIP1 and subsequently increases the activity of transcription factors, such as JUN, that respond to these complexes. Interacts with protein OPG198; this interaction inhibits the repressive activity of OPG198 pseudokinase on viral replication factory formation. Requires Mg(2+) as cofactor. In terms of processing, autophosphorylated.

It is found in the virion. The protein resides in the host cytoplasm. It catalyses the reaction L-seryl-[protein] + ATP = O-phospho-L-seryl-[protein] + ADP + H(+). The catalysed reaction is L-threonyl-[protein] + ATP = O-phospho-L-threonyl-[protein] + ADP + H(+). Essential serine/threonine-protein kinase that plays different role in the viral life cycle. Phosphorylates the host small ribosomal protein RACK1 thereby customizing the ribosomes to a state optimal for viral mRNAs (which contain poly-A leaders) but not for host mRNAs. Facilitates viral DNA replication by inhibiting host BANF1, a cellular host defense responsive to foreign DNA. Phosphorylates host BANF1 on serine and threonine residues; this leads to BANF1 relocalization to the cytoplasm, loss of dimerization and impaired DNA binding activity. Indeed, BANF1 activity depends on its DNA-binding property which is blocked by VPK1-mediated phosphorylation. Required for viral intermediate genes expression, probably by inhibiting host BANF1. Modulates cellular responses via host JUN by two different mechanisms, either by direct phosphorylation or by modulation of upstream JIP1-MAPK complexes. Seems to participate in the accumulation/processing of late proteins and thus in virion maturation. In addition, inhibits B12 repressive activity on viral DNA replication via a phosphorylation-dependent mechanism. The sequence is that of B1 kinase (OPG187) from Cynomys gunnisoni (Gunnison's prairie dog).